A 196-amino-acid polypeptide reads, in one-letter code: Proteasome subunit beta 1 (196 aa).

Positions 1-6 (MEELPA) are cleaved as a propeptide — removed in mature form; by autocatalysis. The active-site Nucleophile is T7.

It belongs to the peptidase T1B family. In terms of assembly, the 20S proteasome core is composed of 14 alpha and 14 beta subunits that assemble into four stacked heptameric rings, resulting in a barrel-shaped structure. The two inner rings, each composed of seven catalytic beta subunits, are sandwiched by two outer rings, each composed of seven alpha subunits. The catalytic chamber with the active sites is on the inside of the barrel. Has a gated structure, the ends of the cylinder being occluded by the N-termini of the alpha-subunits. Is capped at one or both ends by the proteasome regulatory ATPase, PAN.

Its subcellular location is the cytoplasm. It carries out the reaction Cleavage of peptide bonds with very broad specificity.. With respect to regulation, the formation of the proteasomal ATPase PAN-20S proteasome complex, via the docking of the C-termini of PAN into the intersubunit pockets in the alpha-rings, triggers opening of the gate for substrate entry. Interconversion between the open-gate and close-gate conformations leads to a dynamic regulation of the 20S proteasome proteolysis activity. Component of the proteasome core, a large protease complex with broad specificity involved in protein degradation. The chain is Proteasome subunit beta 1 from Saccharolobus islandicus (strain Y.N.15.51 / Yellowstone #2) (Sulfolobus islandicus).